The chain runs to 334 residues: Methionyl-tRNA formyltransferase (334 aa).

111-114 (SLLP) is a (6S)-5,6,7,8-tetrahydrofolate binding site.

Belongs to the Fmt family.

It catalyses the reaction L-methionyl-tRNA(fMet) + (6R)-10-formyltetrahydrofolate = N-formyl-L-methionyl-tRNA(fMet) + (6S)-5,6,7,8-tetrahydrofolate + H(+). Attaches a formyl group to the free amino group of methionyl-tRNA(fMet). The formyl group appears to play a dual role in the initiator identity of N-formylmethionyl-tRNA by promoting its recognition by IF2 and preventing the misappropriation of this tRNA by the elongation apparatus. This is Methionyl-tRNA formyltransferase from Cyanothece sp. (strain PCC 7425 / ATCC 29141).